Here is a 326-residue protein sequence, read N- to C-terminus: tRNA dimethylallyltransferase (326 aa).

18–25 (GPTASGKS) provides a ligand contact to ATP. Position 20–25 (20–25 (TASGKS)) interacts with substrate. 2 interaction with substrate tRNA regions span residues 43-46 (DSMQ) and 167-171 (QRIAR).

Belongs to the IPP transferase family. In terms of assembly, monomer. Mg(2+) serves as cofactor.

It carries out the reaction adenosine(37) in tRNA + dimethylallyl diphosphate = N(6)-dimethylallyladenosine(37) in tRNA + diphosphate. In terms of biological role, catalyzes the transfer of a dimethylallyl group onto the adenine at position 37 in tRNAs that read codons beginning with uridine, leading to the formation of N6-(dimethylallyl)adenosine (i(6)A). The chain is tRNA dimethylallyltransferase from Rhodospirillum rubrum (strain ATCC 11170 / ATH 1.1.1 / DSM 467 / LMG 4362 / NCIMB 8255 / S1).